The sequence spans 407 residues: Protein RecA (407 aa).

Position 79–86 (79–86 (GPESSGKT)) interacts with ATP. The segment at 358–407 (LSLEASPEESDAKTLRRXASRGAGASSSRVQEGSAANDHFQDESTTAKLL) is disordered. The segment covering 377-386 (SRGAGASSSR) has biased composition (low complexity).

The protein belongs to the RecA family.

The protein localises to the cytoplasm. Can catalyze the hydrolysis of ATP in the presence of single-stranded DNA, the ATP-dependent uptake of single-stranded DNA by duplex DNA, and the ATP-dependent hybridization of homologous single-stranded DNAs. It interacts with LexA causing its activation and leading to its autocatalytic cleavage. The polypeptide is Protein RecA (Treponema pallidum (strain Nichols)).